The primary structure comprises 802 residues: Copper-exporting P-type ATPase (802 aa).

2 consecutive HMA domains span residues 5 to 71 and 73 to 139; these read KEIA…YHVV and EKAE…YKLK. Positions 16, 19, 84, and 87 each coordinate Cu(+). The next 6 helical transmembrane spans lie at 162–181, 196–218, 230–249, 259–278, 412–434, and 447–469; these read LIFS…SHFT, WMQF…VGAY, VLVA…LTFQ, GLYY…GKLF, ISGI…WYLW, and FIAV…SIMA. Catalysis depends on aspartate 499, which acts as the 4-aspartylphosphate intermediate. Mg(2+)-binding residues include aspartate 698 and aspartate 702. The next 2 helical transmembrane spans lie at 756 to 775 and 779 to 796; these read LFWA…LGFL and IAGA…LNAL.

The protein belongs to the cation transport ATPase (P-type) (TC 3.A.3) family. Type IB subfamily. As to quaternary structure, monomer at sub-stoichiometric copper concentrations. Homodimer at higher copper concentrations. Forms a heterodimer (electrostatic interactions) with CopZ during the transfer of Cu(+).

It localises to the cell membrane. It catalyses the reaction Cu(+)(in) + ATP + H2O = Cu(+)(out) + ADP + phosphate + H(+). Functionally, involved in copper export. The protein is Copper-exporting P-type ATPase (copA) of Bacillus subtilis (strain 168).